The chain runs to 283 residues: Tetraspanin-33 (283 aa).

At 1–24 (MARRPGAPAAYGEDFSFVSPLVKY) the chain is on the cytoplasmic side. A helical membrane pass occupies residues 25–45 (LLFFFNMLFWVISMVMVAVGV). The Extracellular segment spans residues 46 to 64 (YARLMKHEEAALACLAVDP). A helical transmembrane segment spans residues 65-85 (AILLIVVGILMFLLTFCGCIG). Over 86–96 (SLRENICLLQT) the chain is Cytoplasmic. The helical transmembrane segment at 97-117 (FSLCLTVVFLLQLAAGVLGFV) threads the bilayer. Over 118–235 (FSDKVRGKVS…DRLVNWIHSN (118 aa)) the chain is Extracellular. Intrachain disulfides connect Cys156–Cys224, Cys157–Cys189, Cys173–Cys183, and Cys190–Cys203. Asn172 carries an N-linked (GlcNAc...) asparagine glycan. Residues 236–256 (LFVLGGVALGLAIPQLVGIML) form a helical membrane-spanning segment. Residues 257-283 (SMILVSQIKDQIKLQLYNQQHRADPWY) are Cytoplasmic-facing.

It belongs to the tetraspanin (TM4SF) family. Homodimer; disulfide-linked. Interacts (via extracellular domain) with ADAM10 (via extracellular domain). Interacts (via cytoplasmic domain) with PLEKHA7 (via WW domains); the interaction is dependent on PDZD11 being bound to PLEKHA7 and facilitates the docking of ADAM10 to zonula adherens.

It is found in the cell membrane. The protein resides in the cell junction. Its subcellular location is the adherens junction. The protein localises to the cytoplasm. In terms of biological role, part of TspanC8 subgroup, composed of 6 members that interact with the transmembrane metalloprotease ADAM10. This interaction is required for ADAM10 exit from the endoplasmic reticulum and for enzymatic maturation and trafficking to the cell surface as well as substrate specificity. Different TspanC8/ADAM10 complexes have distinct substrates. Plays an important role in normal erythropoiesis. It has a role in the differentiation of erythroid progenitors. Negatively regulates ligand-induced Notch activity probably by regulating ADAM10 activity. Mediates docking of ADAM10 to zonula adherens by interacting with ADAM10 and, in a PDZD11-dependent manner, with the zonula adherens protein PLEKHA7. This chain is Tetraspanin-33 (TSPAN33), found in Bos taurus (Bovine).